The chain runs to 395 residues: Cystathionine beta-lyase MetC (395 aa).

At lysine 210 the chain carries N6-(pyridoxal phosphate)lysine.

Belongs to the trans-sulfuration enzymes family. In terms of assembly, homotetramer; dimer of dimers. Requires pyridoxal 5'-phosphate as cofactor.

Its subcellular location is the cytoplasm. The enzyme catalyses L,L-cystathionine + H2O = L-homocysteine + pyruvate + NH4(+). It catalyses the reaction L-cysteine + H2O = hydrogen sulfide + pyruvate + NH4(+) + H(+). It carries out the reaction an S-substituted L-cysteine + H2O = a thiol + pyruvate + NH4(+). It functions in the pathway amino-acid biosynthesis; L-methionine biosynthesis via de novo pathway; L-homocysteine from L-cystathionine: step 1/1. Its activity is regulated as follows. L-cysteine inhibits cystathionine beta-lyase activity competitively. Inhibited by aminoethoxyvinylglycine (AVG). In terms of biological role, primarily catalyzes the cleavage of cystathionine to homocysteine, pyruvate and ammonia during methionine biosynthesis. Also exhibits cysteine desulfhydrase activity, producing sulfide from cysteine. In addition, under certain growth conditions, exhibits significant alanine racemase coactivity. The sequence is that of Cystathionine beta-lyase MetC from Escherichia coli (strain K12).